The following is a 588-amino-acid chain: Probable cytochrome c oxidase subunit 1-beta (588 aa).

The interval 1-26 (MTATPAQRRPALPATRPYPARHGPKG) is disordered. Residues 43 to 63 (VLYLVSATGFFLIGGLLALLM) form a helical membrane-spanning segment. Fe(II)-heme a is bound at residue histidine 87. The next 6 helical transmembrane spans lie at 90–110 (IMLL…VLPL), 128–148 (WLYL…GGAA), 171–191 (LWIL…VNMI), 214–234 (ILIT…ALMA), 259–279 (LFWF…FGII), and 291–311 (IFGY…SMAV). Residues histidine 265 and tyrosine 269 each coordinate Cu cation. The segment at residues 265–269 (HPEVY) is a cross-link (1'-histidyl-3'-tyrosine (His-Tyr)). The Cu cation site is built by histidine 314 and histidine 315. The next 2 membrane-spanning stretches (helical) occupy residues 320–340 (GAVL…PTGV) and 360–380 (MLFA…GVIL). Histidine 398 lines the heme a3 pocket. Transmembrane regions (helical) follow at residues 399–419 (FHYV…YFWF), 434–454 (LHFW…HWLG), and 477–497 (VSTI…WNGF). Histidine 400 provides a ligand contact to Fe(II)-heme a. Positions 557 to 588 (AEAHAGRRAGHGAGAELSVPSTVATKDDDHTS) are disordered.

This sequence belongs to the heme-copper respiratory oxidase family. In terms of assembly, associates with subunits II, III and IV to form cytochrome c oxidase. Cu(2+) serves as cofactor. The cofactor is heme.

It is found in the cell membrane. It catalyses the reaction 4 Fe(II)-[cytochrome c] + O2 + 8 H(+)(in) = 4 Fe(III)-[cytochrome c] + 2 H2O + 4 H(+)(out). The protein operates within energy metabolism; oxidative phosphorylation. Its function is as follows. Cytochrome c oxidase is the component of the respiratory chain that catalyzes the reduction of oxygen to water. Subunits 1-3 form the functional core of the enzyme complex. CO I is the catalytic subunit of the enzyme. Electrons originating in cytochrome c are transferred via the copper A center of subunit 2 and heme A of subunit 1 to the bimetallic center formed by heme A3 and copper B. The polypeptide is Probable cytochrome c oxidase subunit 1-beta (ctaD2) (Nocardia farcinica (strain IFM 10152)).